The primary structure comprises 187 residues: Protein GrpE (187 aa).

The tract at residues 1 to 30 (MEKKETKSESEKTNKQDNKNTKSQKKENLN) is disordered.

This sequence belongs to the GrpE family. As to quaternary structure, homodimer.

The protein resides in the cytoplasm. Participates actively in the response to hyperosmotic and heat shock by preventing the aggregation of stress-denatured proteins, in association with DnaK and GrpE. It is the nucleotide exchange factor for DnaK and may function as a thermosensor. Unfolded proteins bind initially to DnaJ; upon interaction with the DnaJ-bound protein, DnaK hydrolyzes its bound ATP, resulting in the formation of a stable complex. GrpE releases ADP from DnaK; ATP binding to DnaK triggers the release of the substrate protein, thus completing the reaction cycle. Several rounds of ATP-dependent interactions between DnaJ, DnaK and GrpE are required for fully efficient folding. In Borreliella burgdorferi (strain ATCC 35210 / DSM 4680 / CIP 102532 / B31) (Borrelia burgdorferi), this protein is Protein GrpE.